The following is a 923-amino-acid chain: MHCGLVLILFTGIFLIVSALKNDKCGDNIRITSANYLTSPGYPVSYYPSQKCIWVITAPGPNQRILINFNPHFDLEDRECKYDYVEVRDGVDENGQLVGKYCGKIAPSPVVSSGNQLFIKFVSDYETHGAGFSIRYEIFKTGPECSRNFTSSSGVIKSPGFPEKYPNNLDCTFMIFAPKMSEIVLEFESFELEPDTQPPAGVFCRYDRLEIWDGFPGVGPYIGRYCGQNTPGRIISYTGTLAMTINTDSAIAKEGFSANFTVLERTVPDDFDCTEPLGMETGEIHSDQIMASSQYSNSWSAERSRLNNPENGWTPLKDTNKEWIQVDLGFLRFVSAIGTQGAISQETKKKYYVKEYKVDVSSNGEDWITIKDGPKQKLFQGNTNPTDVVKAKFPKPTLTRYLRIRPINWETGIALRFEVYGCKISEYPCSGMLGMVSGLITDSQITVSSHIERTWVSENARLLTSRSGWMLLPQSQPYADEWLQIDLAEEKLVKGLIIQGGKHRDNKVFMKKFRLGYSNNGSDWKLVMDATGNKPKIFEGNLNYDTPALRTMEPVLTRFVRIYPDRGTPAGMGLRLELLGCEMEVPTVPPTTPAASTTPSDECDDDQANCHSGTGDGYDQTGGTTATETIREMSTIPAFLWFACDFGWANDPSFCGWISEDSGFRWQIQSSGTPTLNTGPNMDHTGGSGNFIYTLATGAQETEVARLVSPSVSGQDSDLCLSFWYHMFGSHIGTLHIKQRRETSQGSADVLLWTVSGHQGNRWREGRVLIPHSNKPYQVIIESVVERKSWGDIAVDDIKILDNVNMADCKDPDVPAEPIQPEDNFNEIMVDITDFPDIVENPDIGGAGNMLKTLDPILITIIAMSALGVFLGAICGVVLYCACSHSGMSDRNLSALENYNFELVDGVKLKKDKLNSQNSYSEA.

Residues 1-19 (MHCGLVLILFTGIFLIVSA) form the signal peptide. Residues 20 to 856 (LKNDKCGDNI…AGNMLKTLDP (837 aa)) are Extracellular-facing. Intrachain disulfides connect Cys25–Cys52, Cys80–Cys102, and Cys145–Cys171. CUB domains lie at 25–139 (CGDN…YEIF) and 145–263 (CSRN…FTVL). Asn148 is a glycosylation site (N-linked (GlcNAc...) asparagine). Residues Glu193, Asp207, and Asp248 each coordinate Ca(2+). Cys204 and Cys226 are disulfide-bonded. Asn259 carries N-linked (GlcNAc...) asparagine glycosylation. 2 disulfide bridges follow: Cys273/Cys422 and Cys429/Cys581. F5/8 type C domains follow at residues 273–422 (CTEP…VYGC) and 429–581 (CSGM…LLGC). Residue Asn520 is glycosylated (N-linked (GlcNAc...) asparagine). Residues 587-624 (TVPPTTPAASTTPSDECDDDQANCHSGTGDGYDQTGGT) are disordered. Ser612 carries an O-linked (Xyl...) (chondroitin sulfate) serine; alternate glycan. The O-linked (Xyl...) (heparan sulfate) serine; alternate glycan is linked to Ser612. The 170-residue stretch at 642-811 (FACDFGWAND…DNVNMADCKD (170 aa)) folds into the MAM domain. A helical membrane pass occupies residues 857–877 (ILITIIAMSALGVFLGAICGV). Topologically, residues 878–923 (VLYCACSHSGMSDRNLSALENYNFELVDGVKLKKDKLNSQNSYSEA) are cytoplasmic.

This sequence belongs to the neuropilin family.

It localises to the membrane. Receptor involved in the development of the cardiovascular system, in angiogenesis, in the formation of certain neuronal circuits and in organogenesis outside the nervous system. It mediates the chemorepulsant activity of semaphorins. Regulates angiogenesis through a VEGF-dependent pathway. In Danio rerio (Zebrafish), this protein is Neuropilin-1a (nrp1a).